We begin with the raw amino-acid sequence, 130 residues long: uncharacterized protein (130 aa).

Positions methionine 1 to proline 104 are disordered. The segment covering arginine 88–arginine 97 has biased composition (low complexity).

This is an uncharacterized protein from Homo sapiens (Human).